We begin with the raw amino-acid sequence, 166 residues long: MDGAATKFFRPWESHGSYHHSLPSISPPDSPASTSASSSSSSIGANELTTKRRKCERCTCPNCKAIKHGDRGSQHTHLCSVPGCGKTYKKTSHLRAHLRKHTGDRPFVCDWFDCGKRFDRSDQLIRHKRTHTKEYRFACKFCIRQFSRSDHLQQHLTSVHNIVVVD.

Residues 17 to 45 are disordered; it reads SYHHSLPSISPPDSPASTSASSSSSSIGA. The segment covering 31–42 has biased composition (low complexity); it reads PASTSASSSSSS. 3 consecutive C2H2-type zinc fingers follow at residues 77–101, 107–131, and 137–160; these read HLCSVPGCGKTYKKTSHLRAHLRKH, FVCDWFDCGKRFDRSDQLIRHKRTH, and FACKFCIRQFSRSDHLQQHLTSVH.

Belongs to the Sp1 C2H2-type zinc-finger protein family.

Its function is as follows. Transcription factor. Probably acts downstream of the Wnt signaling pathway. This Caenorhabditis elegans protein is Specificity protein transcription factor 2.